The following is a 126-amino-acid chain: Small ribosomal subunit protein uS12 (126 aa).

The interval 1–28 (MPTIQQLIRSERSKVQKKTKSPALKQCP) is disordered. The residue at position 89 (Asp-89) is a 3-methylthioaspartic acid. Residues 104 to 126 (ATGVKDRKQGRSKYGTKREKAKK) form a disordered region. Basic residues predominate over residues 113–126 (GRSKYGTKREKAKK).

This sequence belongs to the universal ribosomal protein uS12 family. Part of the 30S ribosomal subunit. Contacts proteins S8 and S17. May interact with IF1 in the 30S initiation complex.

Its function is as follows. With S4 and S5 plays an important role in translational accuracy. Interacts with and stabilizes bases of the 16S rRNA that are involved in tRNA selection in the A site and with the mRNA backbone. Located at the interface of the 30S and 50S subunits, it traverses the body of the 30S subunit contacting proteins on the other side and probably holding the rRNA structure together. The combined cluster of proteins S8, S12 and S17 appears to hold together the shoulder and platform of the 30S subunit. This is Small ribosomal subunit protein uS12 from Synechocystis sp. (strain ATCC 27184 / PCC 6803 / Kazusa).